Consider the following 281-residue polypeptide: Hexaprenyl pyrophosphate synthase (281 aa).

Isopentenyl diphosphate is bound by residues lysine 42, arginine 45, and histidine 74. Positions 81 and 85 each coordinate Mg(2+). Arginine 91 provides a ligand contact to isopentenyl diphosphate.

The protein belongs to the FPP/GGPP synthase family. As to quaternary structure, homodimer. It depends on Mg(2+) as a cofactor.

It carries out the reaction 2 isopentenyl diphosphate + (2E,6E,10E)-geranylgeranyl diphosphate = all-trans-hexaprenyl diphosphate + 2 diphosphate. Catalyzes consecutive E-type condensation of two isopentenyl pyrophosphate (IPP) molecules with an allylic substrate such as geranylgeranyl diphosphate (GGPP), farnesyl diphosphate (FPP) or geranyl diphosphate (GPP) to yield the medium-chain product trans-C30-hexaprenyl pyrophosphate (HexPP). GGPP is the physiological substrate. The protein is Hexaprenyl pyrophosphate synthase (gdS-2) of Saccharolobus solfataricus (strain ATCC 35092 / DSM 1617 / JCM 11322 / P2) (Sulfolobus solfataricus).